Here is a 315-residue protein sequence, read N- to C-terminus: Glutaminase (315 aa).

7 residues coordinate substrate: S70, N120, E166, N173, Y197, Y249, and V267.

The protein belongs to the glutaminase family. Homotetramer.

It catalyses the reaction L-glutamine + H2O = L-glutamate + NH4(+). The protein is Glutaminase of Sinorhizobium fredii (strain NBRC 101917 / NGR234).